Consider the following 192-residue polypeptide: NF-kappa-B inhibitor-interacting Ras-like protein 1 (192 aa).

The segment at 1–192 is small GTPase-like; it reads MGKGCKVVVC…KSKGTPSNDI (192 aa). Residue 11 to 18 coordinates GTP; it reads GMASVGKT. The Effector region signature appears at 35 to 43; the sequence is TSDTQEDIY. GTP contacts are provided by residues 61 to 65 and 120 to 123; these read DTRGL and NKCE. The segment at 169 to 192 is disordered; it reads TQPQSKSAFPLPGRKSKGTPSNDI.

Belongs to the small GTPase superfamily. Ras family. KappaB-Ras subfamily.

Its subcellular location is the cytoplasm. Atypical Ras-like protein that acts as a potent regulator of NF-kappa-B activity by preventing the degradation of NF-kappa-B inhibitor beta (NFKBIB) by most signals, explaining why NFKBIB is more resistant to degradation. The protein is NF-kappa-B inhibitor-interacting Ras-like protein 1 (nkiras1) of Danio rerio (Zebrafish).